The chain runs to 228 residues: Lipoprotein-releasing system ATP-binding protein LolD (228 aa).

Residues 9-228 (LEAHDIQKNF…ELINGCLYRR (220 aa)) enclose the ABC transporter domain. 44–51 (GRSGEGKS) provides a ligand contact to ATP.

The protein belongs to the ABC transporter superfamily. Lipoprotein translocase (TC 3.A.1.125) family. In terms of assembly, the complex is composed of two ATP-binding proteins (LolD) and two transmembrane proteins (LolC and LolE).

The protein resides in the cell inner membrane. Functionally, part of the ABC transporter complex LolCDE involved in the translocation of mature outer membrane-directed lipoproteins, from the inner membrane to the periplasmic chaperone, LolA. Responsible for the formation of the LolA-lipoprotein complex in an ATP-dependent manner. The chain is Lipoprotein-releasing system ATP-binding protein LolD from Protochlamydia amoebophila (strain UWE25).